The sequence spans 544 residues: Chaperonin GroEL (544 aa).

ATP is bound by residues 29 to 32, 86 to 90, Gly-413, 476 to 478, and Asp-492; these read TLGP, DGTTT, and NAL.

The protein belongs to the chaperonin (HSP60) family. As to quaternary structure, forms a cylinder of 14 subunits composed of two heptameric rings stacked back-to-back. Interacts with the co-chaperonin GroES.

Its subcellular location is the cytoplasm. It carries out the reaction ATP + H2O + a folded polypeptide = ADP + phosphate + an unfolded polypeptide.. Functionally, together with its co-chaperonin GroES, plays an essential role in assisting protein folding. The GroEL-GroES system forms a nano-cage that allows encapsulation of the non-native substrate proteins and provides a physical environment optimized to promote and accelerate protein folding. The protein is Chaperonin GroEL of Desulfitobacterium hafniense (strain Y51).